A 29-amino-acid polypeptide reads, in one-letter code: SIGSAFKKALPVAKKIGKAALPIAKAALP.

In terms of assembly, homomer of four to six subunits.

It localises to the secreted. Female-specific peptides with potent activity against Gram-positive and Gram-negative bacteria. They have as well hemolytic activity. The chain is Ceratotoxin-B (CTXB) from Ceratitis capitata (Mediterranean fruit fly).